A 1267-amino-acid chain; its full sequence is Ankyrin repeat and ELMO domain-containing protein D (1267 aa).

An ELMO domain is found at 307–466 (SHQRLLETLW…FVSGLASEVL (160 aa)). The segment covering 486 to 496 (KKKEKKSEKRG) has biased composition (basic and acidic residues). Positions 486-598 (KKKEKKSEKR…NNHILNNNHL (113 aa)) are disordered. Low complexity predominate over residues 507 to 598 (GSNGNINSTT…NNHILNNNHL (92 aa)). ANK repeat units follow at residues 655 to 685 (DGNSPLHSAIMNSMTLDCITNGININLFLNT), 689 to 718 (QGLTPLNLACSISPYLIIDFFLQQDTDPFI), 767 to 796 (TLETPLSTAIQSGNEDSVGHLLTLCPNINN), and 801 to 830 (SGQNALHIAISKRNLHIITCLIQNGADPSI). Disordered stretches follow at residues 854–908 (NPTK…NSTS), 924–1040 (TSIN…SPIF), 1057–1082 (SPTQESPQVISTPTSPPYLSNNNGAE), and 1103–1215 (ENLT…PPKD). Low complexity-rich tracts occupy residues 859–870 (SRSTSSTSSSTS), 895–908 (ITNNNSIQYSNSTS), and 924–1033 (TSIN…STSP). Residues 1057–1080 (SPTQESPQVISTPTSPPYLSNNNG) are compositionally biased toward polar residues. Composition is skewed to low complexity over residues 1108-1176 (NSGN…IGSH) and 1184-1213 (HNGPINNGNYPNYRGNNITTSPVGVTVTPP).

This Dictyostelium discoideum (Social amoeba) protein is Ankyrin repeat and ELMO domain-containing protein D (elmoD).